The chain runs to 149 residues: Protein SprT-like (149 aa).

Residues 4–143 form the SprT-like domain; that stretch reads TDYVKQVSLE…CGLCRGKLLL (140 aa). His64 contributes to the Zn(2+) binding site. Residue Glu65 is part of the active site. Position 68 (His68) interacts with Zn(2+).

This sequence belongs to the SprT family. It depends on Zn(2+) as a cofactor.

The protein localises to the cytoplasm. This is Protein SprT-like from Streptococcus pneumoniae (strain Taiwan19F-14).